Here is a 488-residue protein sequence, read N- to C-terminus: UDP-N-acetylmuramate--L-alanine ligase (488 aa).

Position 129 to 135 (129 to 135 (GSHGKTT)) interacts with ATP.

It belongs to the MurCDEF family.

It is found in the cytoplasm. It catalyses the reaction UDP-N-acetyl-alpha-D-muramate + L-alanine + ATP = UDP-N-acetyl-alpha-D-muramoyl-L-alanine + ADP + phosphate + H(+). It participates in cell wall biogenesis; peptidoglycan biosynthesis. Cell wall formation. The polypeptide is UDP-N-acetylmuramate--L-alanine ligase (Prochlorococcus marinus (strain MIT 9313)).